Here is a 506-residue protein sequence, read N- to C-terminus: Aminoaldehyde dehydrogenase 1b (506 aa).

Residue Asp102 coordinates Na(+). Residues 162–164 and 188–191 contribute to the NAD(+) site; these read TPW and KPSE. Position 192 (Leu192) interacts with Na(+). NAD(+)-binding positions include 242-245 and Glu263; that span reads SFET. The active-site Proton acceptor is Glu263. The Nucleophile role is filled by Cys297. Residues Glu396 and Trp462 each coordinate NAD(+).

Belongs to the aldehyde dehydrogenase family.

It catalyses the reaction 4-aminobutanal + NAD(+) + H2O = 4-aminobutanoate + NADH + 2 H(+). It carries out the reaction 3-aminopropanal + NAD(+) + H2O = beta-alanine + NADH + 2 H(+). The enzyme catalyses 4-(trimethylamino)butanal + NAD(+) + H2O = 4-(trimethylamino)butanoate + NADH + 2 H(+). The catalysed reaction is 4-guanidinobutanal + NAD(+) + H2O = 4-guanidinobutanoate + NADH + 2 H(+). It catalyses the reaction betaine aldehyde + NAD(+) + H2O = glycine betaine + NADH + 2 H(+). The protein operates within amine and polyamine biosynthesis; betaine biosynthesis via choline pathway; betaine from betaine aldehyde: step 1/1. Its function is as follows. Dehydrogenase that catalyzes the oxidation of several aminoaldehydes. Metabolizes and detoxifies aldehyde products of polyamine degradation to non-toxic amino acids. Catalyzes the oxidation of 4-aminobutanal and 3-aminopropanal to 4-aminobutanoate and beta-alanine, respectively. Catalyzes the oxidation of 4-(trimethylamino)butanal and 4-guanidinobutanal to 4-trimethylammoniobutanoate and 4-guanidinobutanoate, respectively. Catalyzes the oxidation of betaine aldehyde to glycine betaine. The polypeptide is Aminoaldehyde dehydrogenase 1b (Zea mays (Maize)).